The following is a 319-amino-acid chain: Acetyl esterase (319 aa).

The Involved in the stabilization of the negatively charged intermediate by the formation of the oxyanion hole motif lies at 91-93 (HGG). Catalysis depends on residues S165, D262, and H292.

Belongs to the 'GDXG' lipolytic enzyme family. As to quaternary structure, homodimer. Interacts with MalT and MelA.

It localises to the cytoplasm. Functionally, displays esterase activity towards short chain fatty esters (acyl chain length of up to 8 carbons). Able to hydrolyze triacetylglycerol (triacetin) and tributyrylglycerol (tributyrin), but not trioleylglycerol (triolein) or cholesterol oleate. Negatively regulates MalT activity by antagonizing maltotriose binding. Inhibits MelA galactosidase activity. This is Acetyl esterase from Escherichia coli O139:H28 (strain E24377A / ETEC).